The primary structure comprises 280 residues: Ribosomal protein L11 methyltransferase (280 aa).

4 residues coordinate S-adenosyl-L-methionine: Thr-130, Gly-151, Asp-172, and Asn-213.

The protein belongs to the methyltransferase superfamily. PrmA family.

The protein localises to the cytoplasm. The catalysed reaction is L-lysyl-[protein] + 3 S-adenosyl-L-methionine = N(6),N(6),N(6)-trimethyl-L-lysyl-[protein] + 3 S-adenosyl-L-homocysteine + 3 H(+). In terms of biological role, methylates ribosomal protein L11. In Nitratiruptor sp. (strain SB155-2), this protein is Ribosomal protein L11 methyltransferase.